Here is a 546-residue protein sequence, read N- to C-terminus: Probable protein kinase UbiB (546 aa).

The Protein kinase domain maps to 124–502; the sequence is DFDIKPLASA…QARQGQSRYL (379 aa). ATP contacts are provided by residues 130-138 and Lys153; that span reads LASASIAQV. Asp288 serves as the catalytic Proton acceptor. A run of 2 helical transmembrane segments spans residues 499–519 and 521–541; these read SRYL…LLIS and VEAD…WIIG.

The protein belongs to the ABC1 family. UbiB subfamily.

The protein localises to the cell inner membrane. It participates in cofactor biosynthesis; ubiquinone biosynthesis [regulation]. Its function is as follows. Is probably a protein kinase regulator of UbiI activity which is involved in aerobic coenzyme Q (ubiquinone) biosynthesis. The polypeptide is Probable protein kinase UbiB (Pectobacterium carotovorum subsp. carotovorum (strain PC1)).